We begin with the raw amino-acid sequence, 673 residues long: UvrABC system protein B (673 aa).

The Helicase ATP-binding domain maps to 26-183 (EGLEDGLAHQ…RRLAELQYAR (158 aa)). 39–46 (GVTGSGKT) contacts ATP. The short motif at 92 to 115 (YYDYYQPEAYVPSSDTFIEKDASV) is the Beta-hairpin element. The Helicase C-terminal domain maps to 431-597 (QVDDLLSEIR…GLNKKVVDIL (167 aa)). The disordered stretch occupies residues 608-627 (AKGRGKSRPIVEPDNVPMDM). The UVR domain occupies 633–668 (QQKIHELEGLMMQHAQNLEFEEAAQIRDQLHQLRDL).

Belongs to the UvrB family. As to quaternary structure, forms a heterotetramer with UvrA during the search for lesions. Interacts with UvrC in an incision complex.

Its subcellular location is the cytoplasm. In terms of biological role, the UvrABC repair system catalyzes the recognition and processing of DNA lesions. A damage recognition complex composed of 2 UvrA and 2 UvrB subunits scans DNA for abnormalities. Upon binding of the UvrA(2)B(2) complex to a putative damaged site, the DNA wraps around one UvrB monomer. DNA wrap is dependent on ATP binding by UvrB and probably causes local melting of the DNA helix, facilitating insertion of UvrB beta-hairpin between the DNA strands. Then UvrB probes one DNA strand for the presence of a lesion. If a lesion is found the UvrA subunits dissociate and the UvrB-DNA preincision complex is formed. This complex is subsequently bound by UvrC and the second UvrB is released. If no lesion is found, the DNA wraps around the other UvrB subunit that will check the other stand for damage. The protein is UvrABC system protein B of Escherichia coli O7:K1 (strain IAI39 / ExPEC).